A 151-amino-acid chain; its full sequence is Transcriptional regulator MraZ (151 aa).

SpoVT-AbrB domains follow at residues 5–52 (ANAI…PLDE) and 81–124 (AVDL…DEDA).

The protein belongs to the MraZ family. Forms oligomers.

The protein localises to the cytoplasm. It localises to the nucleoid. The protein is Transcriptional regulator MraZ of Pseudomonas fluorescens (strain Pf0-1).